The chain runs to 244 residues: 3-oxoacyl-[acyl-carrier-protein] reductase FabG (244 aa).

NADP(+) is bound by residues 12–15 (GANQ) and T37. Residues K50 and G53 each coordinate Ca(2+). NADP(+) is bound by residues 59-60 (DL) and N86. Residue S138 participates in substrate binding. Ca(2+) is bound at residue N145. The Proton acceptor role is filled by Y151. NADP(+) is bound by residues 151–155 (YSASK) and I184. Ca(2+) contacts are provided by Q233 and T234.

This sequence belongs to the short-chain dehydrogenases/reductases (SDR) family. In terms of assembly, homotetramer.

It catalyses the reaction a (3R)-hydroxyacyl-[ACP] + NADP(+) = a 3-oxoacyl-[ACP] + NADPH + H(+). Its pathway is lipid metabolism; fatty acid biosynthesis. In terms of biological role, catalyzes the NADPH-dependent reduction of beta-ketoacyl-ACP substrates to beta-hydroxyacyl-ACP products, the first reductive step in the elongation cycle of fatty acid biosynthesis. The protein is 3-oxoacyl-[acyl-carrier-protein] reductase FabG (fabG) of Buchnera aphidicola subsp. Schizaphis graminum (strain Sg).